Reading from the N-terminus, the 392-residue chain is Acetyl-CoA acetyltransferase (392 aa).

Cys85 serves as the catalytic Acyl-thioester intermediate. Cys206, Ser207, Val209, and Lys332 together coordinate CoA. The Proton acceptor role is filled by His336.

Belongs to the thiolase-like superfamily. Thiolase family. Interacts with HMG-CoA synthase (HMGCS) that catalyzes the second step in the pathway and with a DUF35 protein. The acetoacetyl-CoA thiolase/HMG-CoA synthase complex channels the intermediate via a fused CoA-binding site, which allows for efficient coupling of the endergonic thiolase reaction with the exergonic HMGCS reaction.

It catalyses the reaction 2 acetyl-CoA = acetoacetyl-CoA + CoA. The protein operates within metabolic intermediate biosynthesis; (R)-mevalonate biosynthesis; (R)-mevalonate from acetyl-CoA: step 1/3. Functionally, catalyzes the condensation of two acetyl-coA molecules into acetoacetyl-CoA. Functions in the mevalonate (MVA) pathway leading to isopentenyl diphosphate (IPP), a key precursor for the biosynthesis of isoprenoid compounds that are building blocks of archaeal membrane lipids. The sequence is that of Acetyl-CoA acetyltransferase from Methanothermococcus thermolithotrophicus (Methanococcus thermolithotrophicus).